Reading from the N-terminus, the 480-residue chain is MEVVRYFTSNQKQPPATGPKDSIVQLPDIPPVYECNVEVALRFDSVLDPEKLQQSLKRLLEIGNWRQLGGRLRRRDTNSDACGYDLHVPVEFTTERPAFIYKTLESPAAVDEHPVACKMPQPTDPNKILFYNVRDALTPSMTRTHHPRKAQEWAESDLPPLSFEQLNFRDGTIILLLFPHILMDATGYGLFLKAWTCVLQGRMDDVPQCCGFSESITDMLCHKTPAESFTWHNHLLKGLDRLRFTARLLWENICGKEERIIRVPGKFITQTRDKTLADLSTSQDSPFVSHSDVLVAWFVRVVLASLNPQHQRTLVLTNAFDIRHMLPPERAYLQNSVFLAHTMLPVGEVVSNPASFLANEIRRSLVRERTEEQVQARCAWAKDVGIMPLLGSSDMLLCNVSNWSKGGLLDLDFGPAAITQRPGPCVPSSILNCSQMRGVTPEYGIILGKDSQDGWWMQWRLSKFCWAMIERELDTINQTR.

Residues H180 and D412 each act as proton acceptor in the active site.

This sequence belongs to the plant acyltransferase family. In terms of assembly, monomer.

It functions in the pathway secondary metabolite biosynthesis; terpenoid biosynthesis. Its function is as follows. O-acyltransferase; part of the gene cluster that mediates the biosynthesis of calidodehydroaustin, a fungal meroterpenoid. The first step of the pathway is the synthesis of 3,5-dimethylorsellinic acid by the polyketide synthase ausA. 3,5-dimethylorsellinic acid is then prenylated by the polyprenyl transferase ausN. Further epoxidation by the FAD-dependent monooxygenase ausM and cyclization by the probable terpene cyclase ausL lead to the formation of protoaustinoid A. Protoaustinoid A is then oxidized to spiro-lactone preaustinoid A3 by the combined action of the FAD-binding monooxygenases ausB and ausC, and the dioxygenase ausE. Acid-catalyzed keto-rearrangement and ring contraction of the tetraketide portion of preaustinoid A3 by ausJ lead to the formation of preaustinoid A4. The aldo-keto reductase ausK, with the help of ausH, is involved in the next step by transforming preaustinoid A4 into isoaustinone which is in turn hydroxylated by the P450 monooxygenase ausI to form austinolide. The cytochrome P450 monooxygenase ausG modifies austinolide to austinol. Austinol is further acetylated to austin by the O-acetyltransferase ausP, which spontaneously changes to dehydroaustin. The cytochrome P450 monooxygenase ausR then converts dehydroaustin is into 7-dehydrodehydroaustin. The hydroxylation catalyzed by ausR permits the O-acetyltransferase ausQ to add an additional acetyl group to the molecule, leading to the formation of acetoxydehydroaustin. The short chain dehydrogenase ausT catalyzes the reduction of the double bond present between carbon atoms 1 and 2 to convert 7-dehydrodehydroaustin into 1,2-dihydro-7-hydroxydehydroaustin. AusQ catalyzes not only an acetylation reaction but also the addition of the PKS ausV diketide product to 1,2-dihydro-7-hydroxydehydroaustin, forming precalidodehydroaustin. Finally, the iron/alpha-ketoglutarate-dependent dioxygenase converts precalidodehydroaustin into calidodehydroaustin. The polypeptide is O-acyltransferase ausP (Aspergillus calidoustus).